Reading from the N-terminus, the 234-residue chain is Uridylate kinase (234 aa).

An ATP-binding site is contributed by 9-12; it reads KLSG. G51 lines the UMP pocket. The ATP site is built by G52 and R56. UMP is bound by residues D71 and 132–139; that span reads CGNPFFTT. The ATP site is built by T159, Y165, and D168.

This sequence belongs to the UMP kinase family. In terms of assembly, homohexamer.

The protein resides in the cytoplasm. The enzyme catalyses UMP + ATP = UDP + ADP. Its pathway is pyrimidine metabolism; CTP biosynthesis via de novo pathway; UDP from UMP (UMPK route): step 1/1. Its activity is regulated as follows. Inhibited by UTP. Functionally, catalyzes the reversible phosphorylation of UMP to UDP. The sequence is that of Uridylate kinase from Prochlorococcus marinus (strain MIT 9312).